The chain runs to 159 residues: Phosphopantetheine adenylyltransferase (159 aa).

Residue Thr-10 participates in substrate binding. ATP is bound by residues Thr-10–Phe-11 and His-18. Residues Lys-42, Leu-74, and Arg-88 each coordinate substrate. Residues Gly-89 to Arg-91, Glu-99, and Asn-124 to Thr-130 each bind ATP.

Belongs to the bacterial CoaD family. In terms of assembly, homohexamer. Mg(2+) serves as cofactor.

It is found in the cytoplasm. The catalysed reaction is (R)-4'-phosphopantetheine + ATP + H(+) = 3'-dephospho-CoA + diphosphate. It functions in the pathway cofactor biosynthesis; coenzyme A biosynthesis; CoA from (R)-pantothenate: step 4/5. Its function is as follows. Reversibly transfers an adenylyl group from ATP to 4'-phosphopantetheine, yielding dephospho-CoA (dPCoA) and pyrophosphate. The protein is Phosphopantetheine adenylyltransferase of Shewanella pealeana (strain ATCC 700345 / ANG-SQ1).